A 489-amino-acid polypeptide reads, in one-letter code: Ribulose bisphosphate carboxylase large chain (489 aa).

Substrate-binding residues include Asn128 and Thr178. Lys180 acts as the Proton acceptor in catalysis. Lys182 contributes to the substrate binding site. The Mg(2+) site is built by Lys206, Asp208, and Glu209. Lys206 carries the post-translational modification N6-carboxylysine. Residue His298 is the Proton acceptor of the active site. 3 residues coordinate substrate: Arg299, His331, and Ser383.

The protein belongs to the RuBisCO large chain family. Type I subfamily. Heterohexadecamer of 8 large chains and 8 small chains. Mg(2+) serves as cofactor.

It catalyses the reaction 2 (2R)-3-phosphoglycerate + 2 H(+) = D-ribulose 1,5-bisphosphate + CO2 + H2O. The catalysed reaction is D-ribulose 1,5-bisphosphate + O2 = 2-phosphoglycolate + (2R)-3-phosphoglycerate + 2 H(+). In terms of biological role, ruBisCO catalyzes two reactions: the carboxylation of D-ribulose 1,5-bisphosphate, the primary event in carbon dioxide fixation, as well as the oxidative fragmentation of the pentose substrate. Both reactions occur simultaneously and in competition at the same active site. The sequence is that of Ribulose bisphosphate carboxylase large chain from Nitrosospira sp. (strain 40KI).